Here is a 343-residue protein sequence, read N- to C-terminus: Methylthioribose-1-phosphate isomerase (343 aa).

Substrate-binding positions include Arg44–Ala46, Arg85, and Gln192. Residue Asp233 is the Proton donor of the active site. Asn243–Lys244 is a substrate binding site.

Belongs to the eIF-2B alpha/beta/delta subunits family. MtnA subfamily.

The enzyme catalyses 5-(methylsulfanyl)-alpha-D-ribose 1-phosphate = 5-(methylsulfanyl)-D-ribulose 1-phosphate. It participates in amino-acid biosynthesis; L-methionine biosynthesis via salvage pathway; L-methionine from S-methyl-5-thio-alpha-D-ribose 1-phosphate: step 1/6. In terms of biological role, catalyzes the interconversion of methylthioribose-1-phosphate (MTR-1-P) into methylthioribulose-1-phosphate (MTRu-1-P). The polypeptide is Methylthioribose-1-phosphate isomerase (Carboxydothermus hydrogenoformans (strain ATCC BAA-161 / DSM 6008 / Z-2901)).